Consider the following 402-residue polypeptide: D-mannonate dehydratase (402 aa).

Residues N37 and H122 each coordinate substrate. Residue Y159 is the Proton donor/acceptor of the active site. A Mg(2+)-binding site is contributed by D210. Residue H212 is the Proton donor/acceptor of the active site. Mg(2+) contacts are provided by E236 and E262. Substrate contacts are provided by E262, R283, H312, D316, and E339.

Belongs to the mandelate racemase/muconate lactonizing enzyme family. GalD subfamily. Homotetramer. It depends on Mg(2+) as a cofactor.

The catalysed reaction is D-mannonate = 2-dehydro-3-deoxy-D-gluconate + H2O. The protein operates within carbohydrate metabolism; pentose and glucuronate interconversion. Its function is as follows. Catalyzes the dehydration of D-mannonate. Has no detectable activity with a panel of 70 other acid sugars (in vitro). The sequence is that of D-mannonate dehydratase (manD) from Novosphingobium aromaticivorans (strain ATCC 700278 / DSM 12444 / CCUG 56034 / CIP 105152 / NBRC 16084 / F199).